A 269-amino-acid polypeptide reads, in one-letter code: Hydroxypyruvate/pyruvate aldolase (269 aa).

Histidine 47 functions as the Proton acceptor in the catalytic mechanism. The a divalent metal cation site is built by glutamate 151 and aspartate 177.

The protein belongs to the HpcH/HpaI aldolase family. The cofactor is a divalent metal cation.

The enzyme catalyses D-glyceraldehyde + 3-hydroxypyruvate = 2-dehydro-D-gluconate. It carries out the reaction D-glyceraldehyde + 3-hydroxypyruvate = (3R,4S,5R)-3,4,5,6-tetrahydroxy-2-oxohexanoate. The catalysed reaction is D-glyceraldehyde + 3-hydroxypyruvate = 2-dehydro-D-galactonate. It catalyses the reaction D-glyceraldehyde + pyruvate = 2-dehydro-3-deoxy-L-galactonate. The enzyme catalyses 2-dehydro-3-deoxy-D-gluconate = D-glyceraldehyde + pyruvate. Functionally, aldolase which can catalyze in vitro the aldolisation reaction between hydroxypyruvate (HPA) or pyruvate (PA) and D-glyceraldehyde (D-GA). The condensation of hydroxypyruvate and D-glyceraldehyde produces 2-dehydro-D-gluconate as the major product, (3R,4S,5R)-3,4,5,6-tetrahydroxy-2-oxohexanoate and 2-dehydro-D-galactonate. The condensation of pyruvate and D-glyceraldehyde produces 2-dehydro-3-deoxy-L-galactonate as the major product and 2-dehydro-3-deoxy-D-gluconate. The protein is Hydroxypyruvate/pyruvate aldolase of Cupriavidus necator (strain ATCC 17699 / DSM 428 / KCTC 22496 / NCIMB 10442 / H16 / Stanier 337) (Ralstonia eutropha).